We begin with the raw amino-acid sequence, 246 residues long: Polyhedrin (246 aa).

It belongs to the polyhedrin family.

Its function is as follows. Major component of the virus occlusion bodies, which are large proteinaceous structures (polyhedra), that protect the virus from the outside environment for extended periods until they are ingested by insect larvae. This Lepidoptera (butterflies and moths) protein is Polyhedrin (PH).